Consider the following 208-residue polypeptide: Probable nicotinate-nucleotide adenylyltransferase (208 aa).

The protein belongs to the NadD family.

It carries out the reaction nicotinate beta-D-ribonucleotide + ATP + H(+) = deamido-NAD(+) + diphosphate. It functions in the pathway cofactor biosynthesis; NAD(+) biosynthesis; deamido-NAD(+) from nicotinate D-ribonucleotide: step 1/1. Functionally, catalyzes the reversible adenylation of nicotinate mononucleotide (NaMN) to nicotinic acid adenine dinucleotide (NaAD). The protein is Probable nicotinate-nucleotide adenylyltransferase of Symbiobacterium thermophilum (strain DSM 24528 / JCM 14929 / IAM 14863 / T).